Consider the following 108-residue polypeptide: UPF0060 membrane protein amb3269 (108 aa).

The next 4 helical transmembrane spans lie at 4 to 24, 31 to 51, 59 to 79, and 85 to 105; these read IPTY…FWAW, PLWL…LTRI, AYAA…WAVE, and RWDT…IFGP.

Belongs to the UPF0060 family.

It localises to the cell inner membrane. This Paramagnetospirillum magneticum (strain ATCC 700264 / AMB-1) (Magnetospirillum magneticum) protein is UPF0060 membrane protein amb3269.